Reading from the N-terminus, the 213-residue chain is ATP-dependent Clp protease proteolytic subunit 3 (213 aa).

Ser107 acts as the Nucleophile in catalysis. The active site involves His132.

It belongs to the peptidase S14 family. As to quaternary structure, fourteen ClpP subunits assemble into 2 heptameric rings which stack back to back to give a disk-like structure with a central cavity, resembling the structure of eukaryotic proteasomes.

It localises to the cytoplasm. It carries out the reaction Hydrolysis of proteins to small peptides in the presence of ATP and magnesium. alpha-casein is the usual test substrate. In the absence of ATP, only oligopeptides shorter than five residues are hydrolyzed (such as succinyl-Leu-Tyr-|-NHMec, and Leu-Tyr-Leu-|-Tyr-Trp, in which cleavage of the -Tyr-|-Leu- and -Tyr-|-Trp bonds also occurs).. Cleaves peptides in various proteins in a process that requires ATP hydrolysis. Has a chymotrypsin-like activity. Plays a major role in the degradation of misfolded proteins. The polypeptide is ATP-dependent Clp protease proteolytic subunit 3 (Frankia casuarinae (strain DSM 45818 / CECT 9043 / HFP020203 / CcI3)).